We begin with the raw amino-acid sequence, 1616 residues long: DNA (cytosine-5)-methyltransferase 1 (1616 aa).

Residues M1 to V120 form an interaction with DMAP1 region. The interval M1–K148 is interaction with DNMT3A. 2 interaction with the PRC2/EED-EZH2 complex regions span residues M1–K336 and N308–H606. The DMAP1-binding domain maps to P16 to N109. K70 carries the post-translational modification N6,N6-dimethyllysine. Residues V103–H349 are disordered. Phosphoserine is present on residues S127 and S133. T137 carries the phosphothreonine modification. Residue S141 is modified to Phosphoserine. An N6-methyllysine; by SETD7 modification is found at K142. Phosphoserine; by PKB/AKT1 is present on S143. Residues P149–L217 form an interaction with DNMT3B region. Phosphoserine occurs at positions 152 and 154. K160 is subject to N6-acetyllysine. The interaction with PCNA stretch occupies residues R163–G174. At T166 the chain carries Phosphothreonine. K173 and K188 each carry N6-acetyllysine. Residues K177–R205 carry the Nuclear localization signal motif. Basic and acidic residues-rich tracts occupy residues K179–A214, E221–R267, and K281–K306. K259 is subject to N6-acetyllysine; alternate. A Glycyl lysine isopeptide (Lys-Gly) (interchain with G-Cter in SUMO2); alternate cross-link involves residue K259. A homodimerization region spans residues Q310–M502. At S312 the chain carries Phosphoserine. The segment covering E321–M337 has biased composition (basic and acidic residues). The segment at E331 to L550 is DNA replication foci-targeting sequence. Zn(2+) is bound by residues C353 and C356. Position 366 is an N6-acetyllysine (K366). S394 and S398 each carry phosphoserine. 2 residues coordinate Zn(2+): C414 and H418. Residues S509 and S549 each carry the phosphoserine modification. The segment at N646–P692 adopts a CXXC-type zinc-finger fold. Residues R651–K697 are required for activity. Zn(2+)-binding residues include C653, C656, C659, C664, C667, C670, C686, and C691. Positions N693–A754 are autoinhibitory linker. Residues A699–I709 are compositionally biased toward acidic residues. The interval A699–N729 is disordered. A Phosphoserine modification is found at S714. Residues K716–K728 show a composition bias toward basic residues. The residue at position 732 (S732) is a Phosphoserine. An N6-acetyllysine modification is found at K749. Residues E755–P880 enclose the BAH 1 domain. Position 878 is a phosphoserine (S878). Residues K891, K957, K961, K975, and K1054 each carry the N6-acetyllysine modification. In terms of domain architecture, BAH 2 spans H972 to P1100. The tract at residues S1095–P1130 is disordered. Tandem repeats lie at residues K1109–G1110, K1111–G1112, K1113–G1114, K1115–G1116, and K1117–G1118. The interval K1109–P1120 is 6 X 2 AA tandem repeats of K-G. Over residues G1110–P1120 the composition is skewed to basic residues. N6-acetyllysine occurs at positions 1111, 1113, and 1115. An N6-acetyllysine; by EHMT2 modification is found at K1117. N6-acetyllysine is present on residues K1119 and K1121. A 6; approximate repeat occupies K1119 to P1120. The tract at residues K1121 to D1616 is interaction with the PRC2/EED-EZH2 complex. Positions L1139–K1599 constitute an SAM-dependent MTase C5-type domain. The interval L1139–D1616 is catalytic. S-adenosyl-L-methionine is bound by residues S1146, G1150–L1151, E1168–M1169, D1190–C1191, and C1191. C1226 is a catalytic residue. K1349 and K1415 each carry N6-acetyllysine. 2 residues coordinate S-adenosyl-L-methionine: N1578 and V1580. A Glycyl lysine isopeptide (Lys-Gly) (interchain with G-Cter in SUMO2) cross-link involves residue K1609.

The protein belongs to the class I-like SAM-binding methyltransferase superfamily. C5-methyltransferase family. Homodimer. Forms a stable complex with E2F1, BB1 and HDAC1. Forms a complex with DMAP1 and HDAC2, with direct interaction. Interacts with the PRC2/EED-EZH2 complex. Probably part of a corepressor complex containing ZNF304, TRIM28, SETDB1 and DNMT1. Interacts with UHRF1; promoting its recruitment to hemimethylated DNA. Interacts with USP7, promoting its deubiquitination. Interacts with PCNA. Interacts with MBD2 and MBD3. Interacts with DNMT3A and DNMT3B. Interacts with UBC9. Interacts with CSNK1D. Interacts with HDAC1. Interacts with BAZ2A/TIP5. Interacts with SIRT7. Interacts with ZNF263; recruited to the SIX3 promoter along with other proteins involved in chromatin modification and transcriptional corepression where it contributes to transcriptional repression. Interacts with L3MBTL3 and DCAF5; the interaction requires DNMT1 methylation at Lys-142 and is necessary to target DNMT1 for ubiquitination by the CRL4-DCAF5 E3 ubiquitin ligase complex and proteasomal degradation. Interacts with PHF20L1; the interaction requires DNMT1 methylation at Lys-142 and protects DNMT1 from ubiquitination and proteasomal degradation. Sumoylated; sumoylation increases activity. Post-translationally, acetylation on multiple lysines, mainly by KAT2B/PCAF, regulates cell cycle G(2)/M transition. Deacetylation of Lys-1349 and Lys-1415 by SIRT1 increases methyltransferase activity. In terms of processing, phosphorylation of Ser-154 by CDKs is important for enzymatic activity and protein stability. Phosphorylation of Ser-143 by AKT1 prevents methylation by SETD7 thereby increasing DNMT1 stability. Methylation at Lys-142 by SETD7 is necessary for the regulation of DNMT1 proteasomal degradation. Post-translationally, ubiquitinated by UHRF1; interaction with USP7 counteracts ubiquitination by UHRF1 by promoting deubiquitination and preventing degradation by the proteasome. As to expression, ubiquitous; highly expressed in fetal tissues, heart, kidney, placenta, peripheral blood mononuclear cells, and expressed at lower levels in spleen, lung, brain, small intestine, colon, liver, and skeletal muscle. Isoform 2 is less expressed than isoform 1.

Its subcellular location is the nucleus. The enzyme catalyses a 2'-deoxycytidine in DNA + S-adenosyl-L-methionine = a 5-methyl-2'-deoxycytidine in DNA + S-adenosyl-L-homocysteine + H(+). Its function is as follows. Methylates CpG residues. Preferentially methylates hemimethylated DNA. Associates with DNA replication sites in S phase maintaining the methylation pattern in the newly synthesized strand, that is essential for epigenetic inheritance. Associates with chromatin during G2 and M phases to maintain DNA methylation independently of replication. It is responsible for maintaining methylation patterns established in development. DNA methylation is coordinated with methylation of histones. Mediates transcriptional repression by direct binding to HDAC2. In association with DNMT3B and via the recruitment of CTCFL/BORIS, involved in activation of BAG1 gene expression by modulating dimethylation of promoter histone H3 at H3K4 and H3K9. Probably forms a corepressor complex required for activated KRAS-mediated promoter hypermethylation and transcriptional silencing of tumor suppressor genes (TSGs) or other tumor-related genes in colorectal cancer (CRC) cells. Also required to maintain a transcriptionally repressive state of genes in undifferentiated embryonic stem cells (ESCs). Associates at promoter regions of tumor suppressor genes (TSGs) leading to their gene silencing. Promotes tumor growth. This is DNA (cytosine-5)-methyltransferase 1 (DNMT1) from Homo sapiens (Human).